The primary structure comprises 1392 residues: MAALLRPARWLLGAAAAPRLPLSLRLPAGVPGRLSSVVRVAAVGSRPAAGERLSQARLYAIVAEKRDLQEEPAPVRKNSSQFDWALMRLDNSVRRTGRITKGLLQRVFESTCSSGSPGSNQALLLLRSCGSLLPELSLAERTEFAHKIWDKLQQLGVVYDVSHYNALLKVYLQNEYKFSPTDFLAKMEGANIQPNRVTYQRLIAAYCNVGDIEGASKILGFMKTKDLPITEAVFSALVTGHARAGDMENAENILTVMKQAGIEPGPDTYLALLNAHAERGDIGQVRQILEKVEKSDHYFMDRDFLQVIFSFSKAGYPQYVSEILEKITYERRSIPDAMNLILFLATEKLEDTAFQVLLALPLSKDESSDNFGSFFLRHCVTLDLPPEKLIDYCRRLRDAKLHSSSLQFTLHCALQANRTALAKAVMEALREEGFPIRPHYFWPLLAGHQKTKNVQGIIDILKIMNKVGVDPDQETYINYVFPCFDSAQSVRAALQENECLLASSTFAQAEVKNEAINGNLQNILSFLESNTLPFSFSSLRNSLILGFRRSMNIDLWSKITELLYKDERYCSKPPGPAEAVGYFLYNLIDSMSDSEVQAKEERLRQYFHQLQEMNVKVPENIYKGICNLLNTYHVPELIKDIKVLVDREKVDSQKTSQVTSSDLESTLEKLKAEGQPVGSALKQLLLLLCSEENMQKALEVKAKYESDMVIGGYAALINLCCRHDNAEDAWNLKQEVDRLDASAILDTAKYVALVKVLGKHSRLQDAINILKEMKEKDVVIKDATVLSFFHILNGAALRGEIETVKQLHEAIVTLGLAKPSSNISFPLVTVHLEKGDLPAALEASIACHKKYKVLPRIHDVLCKLVEKGETDLIQKAMDFVSQEQGEMTMLYDLFFAFLQTGNYKEAKKIIETPGIRARPTRLQWFCDRCIASNQVEALEKLVELTEKLFECDRDQMYYNLLKLYKISSDWQRADAAWTKMQEENIIPRERTLRLLAEILKTSNQEVPFDVPELWFGDDRPSLSPSSRSAGEDVTEKTLLSNCKLKKSKDAYNIFLKAEKQNVVFSSETYSTLIGLLLSKDDFTQAMHVKDFAETHIKGFTLNDAANSLLIIRQVRRDYLKGALATLRAALDLKQVPSQIAVTRLIQALALKGDVESIEAIQRMVAGLDTIGLSKMVFINNIALAQMKNNKLDAAIENIEHLLASENQAIEPQYFGLSYLFRKVIEEQMEPALEKLSIMSERMANQFALYKPVTDLFLQLVDSGKVDEARALLERCGAIAEQSSLLSVFCLRTSQKPKKAPVLKTLLELIPELRDNDKVYSCSMKSYALDKDVASAKALYEYLTAKNLKLDDLFLKRYAALLKDVGEPVPFPEPPESFAFYIKQLKEARESPS.

Residues 1–59 (MAALLRPARWLLGAAAAPRLPLSLRLPAGVPGRLSSVVRVAAVGSRPAAGERLSQARLY) constitute a mitochondrion transit peptide. PPR repeat units lie at residues 125-159 (LLRSCGSLLPELSLAERTEFAHKIWDKLQQLGVVY), 160-194 (DVSHYNALLKVYLQNEYKFSPTDFLAKMEGANIQP), 195-229 (NRVTYQRLIAAYCNVGDIEGASKILGFMKTKDLPI), 230-264 (TEAVFSALVTGHARAGDMENAENILTVMKQAGIEP), 265-299 (GPDTYLALLNAHAERGDIGQVRQILEKVEKSDHYF), 300-334 (MDRDFLQVIFSFSKAGYPQYVSEILEKITYERRSI), 402-436 (HSSSLQFTLHCALQANRTALAKAVMEALREEGFPI), 437-471 (RPHYFWPLLAGHQKTKNVQGIIDILKIMNKVGVDP), 677-708 (VGSALKQLLLLLCSEENMQKALEVKAKYESDM), 709-745 (VIGGYAALINLCCRHDNAEDAWNLKQEVDRLDASAIL), 746-783 (DTAKYVALVKVLGKHSRLQDAINILKEMKEKDVVIKDA), 784-820 (TVLSFFHILNGAALRGEIETVKQLHEAIVTLGLAKPS), 821-856 (SNISFPLVTVHLEKGDLPAALEASIACHKKYKVLPR), and 953-987 (RDQMYYNLLKLYKISSDWQRADAAWTKMQEENIIP). 3 positions are modified to N6-acetyllysine: Lys-151, Lys-186, and Lys-225. Lys-291 is modified (N6-acetyllysine). Position 462 is an N6-acetyllysine (Lys-462). An N6-acetyllysine modification is found at Lys-749. Residues 931 to 1050 (ASNQVEALEK…NCKLKKSKDA (120 aa)) form an RNA-binding region. Residues Ser-1025, Ser-1026, and Ser-1028 each carry the phosphoserine modification. PPR repeat units follow at residues 1030–1064 (GEDVTEKTLLSNCKLKKSKDAYNIFLKAEKQNVVF), 1065–1101 (SSETYSTLIGLLLSKDDFTQAMHVKDFAETHIKGFTL), 1102–1136 (NDAANSLLIIRQVRRDYLKGALATLRAALDLKQVP), 1137–1175 (SQIAVTRLIQALALKGDVESIEAIQRMVAGLDTIGLSKM), 1176–1210 (VFINNIALAQMKNNKLDAAIENIEHLLASENQAIE), and 1315–1349 (NDKVYSCSMKSYALDKDVASAKALYEYLTAKNLKL). Ser-1137 carries the post-translational modification Phosphoserine.

In terms of assembly, component of mRNP complexes associated with HNRPA1. Component of the complex, at least composed of LRPPRC, BECN1 and BCL2; the interactions prevent BECN1 from forming an autophagy-inducing complex with PIK3C3. Interacts with CECR2, HEBP2, MAP1S and UXT. Interacts with PPARGC1A. Interacts with FOXO1. Interacts (via N-terminus) with EIF4E; the interaction promotes association of EIF4E with 4ESE-containing mRNAs. Interacts with exportin XPO1/CRM1; interacts both alone and in complex with EIF4E and 4ESE-containing mRNAs to form an EIF4E-dependent mRNA export complex. Interacts with importin IPO8; the interaction occurs when LRPPRC is in its RNA-free form and returns LRPPRC to the nucleus for further export rounds. Interacts with BECN1. As to expression, strongly expressed in heart, liver and kidney. Weakly expressed in brain, skeletal muscle and testes.

The protein resides in the mitochondrion. The protein localises to the nucleus. Its subcellular location is the nucleoplasm. It is found in the nucleus inner membrane. It localises to the nucleus outer membrane. In terms of biological role, may play a role in RNA metabolism in both nuclei and mitochondria. In the nucleus binds to HNRPA1-associated poly(A) mRNAs and is part of nmRNP complexes at late stages of mRNA maturation which are possibly associated with nuclear mRNA export. Positively modulates nuclear export of mRNAs containing the EIF4E sensitivity element (4ESE) by binding simultaneously to both EIF4E and the 4ESE and acting as a platform for assembly for the RNA export complex. Also binds to exportin XPO1/CRM1 to engage the nuclear pore and traffic the bound mRNAs to the cytoplasm. May bind mature mRNA in the nucleus outer membrane. In mitochondria binds to poly(A) mRNA. Plays a role in translation or stability of mitochondrially encoded cytochrome c oxidase (COX) subunits. May be involved in transcription regulation. Cooperates with PPARGC1A to regulate certain mitochondrially encoded genes and gluconeogenic genes and may regulate docking of PPARGC1A to transcription factors. Seems to be involved in the transcription regulation of the multidrug-related genes MDR1 and MVP. Part of a nuclear factor that binds to the invMED1 element of MDR1 and MVP gene promoters. Binds single-stranded DNA. Required for maintaining mitochondrial potential. Suppresses the initiation of basal levels of autophagy and mitophagy by sustaining BCL2 levels. In Mus musculus (Mouse), this protein is Leucine-rich PPR motif-containing protein, mitochondrial (Lrpprc).